Reading from the N-terminus, the 131-residue chain is Profilin-2 (131 aa).

Cysteines 13 and 115 form a disulfide. An Involved in PIP2 interaction motif is present at residues 81 to 97 (AVIRGKKGPGGVTVKKT). A Phosphothreonine modification is found at threonine 111.

This sequence belongs to the profilin family. Multimer. Occurs in many kinds of cells as a complex with monomeric actin in a 1:1 ratio. In terms of processing, phosphorylated by MAP kinases.

It localises to the cytoplasm. It is found in the cytoskeleton. Its function is as follows. Binds to actin and affects the structure of the cytoskeleton. At high concentrations, profilin prevents the polymerization of actin, whereas it enhances it at low concentrations. By binding to PIP2, it inhibits the formation of IP3 and DG. The polypeptide is Profilin-2 (Hevea brasiliensis (Para rubber tree)).